The sequence spans 1497 residues: Polyunsaturated fatty acid synthase subunit C (1497 aa).

Dehydratase (DH) domain stretches follow at residues Y271–K422 and Q797–I937. Positions A944–E958 are enriched in low complexity. Positions A944 to A977 are disordered. The segment at L1026–R1470 is enoylreductase (ER) domain.

The protein belongs to the thioester dehydratase family. FabA subfamily. Component of the polyunsaturated fatty acid synthase complex composed of at least ORF-A, ORF-B and ORF-C.

It functions in the pathway lipid metabolism; fatty acid biosynthesis. In terms of biological role, polyketide synthase-like protein; part of the polyunsaturated fatty acid synthase composed of the 3 PKS-like subunits A, B and C. While the saturated fatty acids (SFAs) in Thraustochytrium are produced by the conventional fatty acid synthase (FAS) pathway, polyunsaturated fatty acids (PUFAs) including docosahexeanoic acid (DHA) and docosapentaenoic acid (DPA) are synthesized via an anaerobical PKS pathway. PUFA synthase assimilates fatty acyl-CoA, the product of FAS, as the starter unit to synthesize DPA, and this starter unit may be butyryl-CoA, hexanoyl-CoA, or octanoyl-CoA. DPA and DHA biosynthesis seem to differ by the reduction at the N-3 position by PUFA synthase, not the extension of carbon chain. In DHA biosynthesis, PUFA synthase extends the fatty acyl chain from the methyl toward the carboxyl end, and the double bond is formed when the carbon chain is growing, instead of afterward. Therefore, PUFA synthase is unable to transform DPA to DHA, suggesting that DPA is not the precursor of DHA. Moreover, DPA molecule is partly extended by FAS KS domain, so DPA biosynthesis is less dependent on PUFA synthase KS domain than DHA. The protein is Polyunsaturated fatty acid synthase subunit C of Thraustochytrium sp. (strain ATCC 26185 / S-3).